We begin with the raw amino-acid sequence, 880 residues long: Kinesin heavy chain (880 aa).

A Kinesin motor domain is found at serine 4–isoleucine 327. Residues glycine 85–serine 92 and glycine 235–threonine 242 contribute to the ATP site. The segment at valine 388–isoleucine 426 is disordered. Residues proline 399–alanine 408 show a composition bias toward polar residues. Positions isoleucine 428–arginine 849 form a coiled coil.

The protein belongs to the TRAFAC class myosin-kinesin ATPase superfamily. Kinesin family. Kinesin subfamily.

The protein localises to the cytoplasm. Its subcellular location is the cytoskeleton. Kinesin is a microtubule-associated force-producing protein that may play a role in organelle transport. Its motor activity is directed toward the microtubule's plus end. This chain is Kinesin heavy chain (klp1), found in Botryotinia fuckeliana (Noble rot fungus).